The following is a 96-amino-acid chain: Large ribosomal subunit protein eL43 (96 aa).

The C4-type zinc-finger motif lies at C41–C62.

This sequence belongs to the eukaryotic ribosomal protein eL43 family. It depends on Zn(2+) as a cofactor.

This Methanococcus maripaludis (strain C6 / ATCC BAA-1332) protein is Large ribosomal subunit protein eL43.